The primary structure comprises 257 residues: Nuclear receptor subfamily 0 group B member 2 (257 aa).

One can recognise an NR LBD domain in the interval 16–257; sequence SRPAILYALL…GLLGDMLLLR (242 aa). The residue at position 57 (Arg-57) is a Symmetric dimethylarginine; by PRMT5.

It belongs to the nuclear hormone receptor family. NR0 subfamily. In terms of assembly, interacts (via N-terminus) with NEUROD1 (via N-terminus and C-terminus). Interacts with ID2. Interacts with RORG, NFIL3, NR1D1 and BHLHE41. Heterodimer; efficient DNA binding requires dimerization with another bHLH protein. Interacts with RARA, RXRA, THRB, NR5A1, NR5A2, NR1I3, PPARA, PPARG and EID1. Interacts with HNF4A; the resulting heterodimer is transcriptionally inactive. Interacts with DDX3X; this interaction disrupts the interaction between HNF4 and NR0B2/SHP that forms inactive heterodimers and enhances the formation of active HNF4 homodimers. Arginine methylation by PRMT5 enhances repression activity of metabolic genes in liver in response to bile acid signaling, by increasing interaction with cofactors. Liver. Low levels of expression were detected in heart and pancreas.

It is found in the nucleus. Its subcellular location is the cytoplasm. In terms of biological role, transcriptional regulator that acts as a negative regulator of receptor-dependent signaling pathways. Specifically inhibits transactivation of the nuclear receptor with which it interacts. Inhibits transcriptional activity of NEUROD1 on E-box-containing promoter by interfering with the coactivation function of the p300/CBP-mediated transcription complex for NEUROD1. Essential component of the liver circadian clock which via its interaction with NR1D1 and RORG regulates NPAS2-mediated hepatic lipid metabolism. Regulates the circadian expression of cytochrome P450 (CYP) enzymes. Represses: NR5A2 and HNF4A to down-regulate CYP2C38, NFLI3 to up-regulate CYP2A5, BHLHE41/HNF1A axis to up-regulate CYP1A2, CYP2E1 and CYP3A11, and NR1D1 to up-regulate CYP2B10, CYP4A10 and CYP4A14. This chain is Nuclear receptor subfamily 0 group B member 2 (NR0B2), found in Homo sapiens (Human).